A 138-amino-acid polypeptide reads, in one-letter code: Large ribosomal subunit protein uL16 (138 aa).

Residues 1 to 29 (MSLLQPRKVKWRKPQKGRTKGKATRRNQV) form a disordered region. Basic residues predominate over residues 7-25 (RKVKWRKPQKGRTKGKATR).

Belongs to the universal ribosomal protein uL16 family. Part of the 50S ribosomal subunit.

Binds 23S rRNA and is also seen to make contacts with the A and possibly P site tRNAs. The sequence is that of Large ribosomal subunit protein uL16 from Sulfurihydrogenibium sp. (strain YO3AOP1).